A 386-amino-acid polypeptide reads, in one-letter code: Mannitol-1-phosphate 5-dehydrogenase (386 aa).

NAD(+) is bound at residue 3 to 14; the sequence is AVHFGAGNIGRG.

This sequence belongs to the mannitol dehydrogenase family.

The catalysed reaction is D-mannitol 1-phosphate + NAD(+) = beta-D-fructose 6-phosphate + NADH + H(+). This Brevibacillus brevis (strain 47 / JCM 6285 / NBRC 100599) protein is Mannitol-1-phosphate 5-dehydrogenase.